We begin with the raw amino-acid sequence, 424 residues long: Double homeobox protein 4 (424 aa).

The span at 1 to 10 shows a compositional bias: polar residues; sequence MALPTPSDST. Disordered stretches follow at residues 1–24, 72–102, 218–362, and 388–414; these read MALPTPSDSTLPAEARGRGRRRRL, SRQLRQHRRESRPWPGRRGPPEGRRKRTAVT, LQPS…LQEP, and QPLLETEAPGELEASEEAASLEAPLSE. 2 DNA-binding regions (homeobox) span residues 19–78 and 94–153; these read GRRR…LRQH and GRRK…PGQG. Over residues 265 to 274 the composition is skewed to basic and acidic residues; the sequence is KSREDRDPQR. Composition is skewed to low complexity over residues 278–302 and 319–329; these read PGPCAVAQPGPAQAGPQGQGVLAPP and AGAAWEPQAGA. The segment at 327–424 is required for interaction with EP300 and CREBBP, and for transcriptional activation of target genes; that stretch reads AGAAPPPQPA…EEYRALLEEL (98 aa). Residues 405–424 are important for transcriptional activation of target genes; that stretch reads AASLEAPLSEEEYRALLEEL.

This sequence belongs to the paired homeobox family. As to quaternary structure, binds DNA as a monomer. Interacts (via C-terminus) with EP300 and CREBBP. In terms of tissue distribution, isoform 1: Does not seem to be expressed in normal muscle, but is detected in muscle of individuals with FSHD, and also in testis (at protein level). Isoform 1: Does not seem to be expressed in normal muscle, but in muscle of individuals with FSHD, where it may be toxic to cells. Isoform 2: Detected in skeletal muscle, fibroblasts and testis from healthy individuals.

Its subcellular location is the nucleus. It localises to the cytoplasm. Transcription factor that is selectively and transiently expressed in cleavage-stage embryos. Binds to double-stranded DNA elements with the consensus sequence 5'-TAATCTAATCA-3'. Binds to chromatin containing histone H3 acetylated at 'Lys-27' (H3K27ac) and promotes deacetylation of H3K27ac. In parallel, binds to chromatin that lacks histone H3 acetylation at 'Lys-27' (H3K27ac) and recruits EP300 and CREBBP to promote acetylation of histone H3 at 'Lys-27' at new sites. Involved in transcriptional regulation of numerous genes, primarily as transcriptional activator, but also mediates repression of a set of target genes. Promotes expression of ZSCAN4 and KDM4E, two proteins with essential roles during early embryogenesis. Promotes nuclear translocation of CTNNB1/beta-catenin and its subsequent activation of target genes. Heterologous expression in cultured embryonic stem cells mediates transcription of HERVL retrotransposons and transcripts derived from ACRO1 and HSATII satellite repeats. May activate expression of PITX1. May regulate microRNA (miRNA) expression. Inappropriate expression can inhibit myogenesis and promote apoptosis. In terms of biological role, probably inactive as a transcriptional activator, due to the absence of the C-terminal region that is important for transcriptional activation. Can inhibit transcriptional activation mediated by isoform 1. Heterologous expression of isoform 2 has no deleterious effect on cell survival. The chain is Double homeobox protein 4 from Homo sapiens (Human).